The following is a 584-amino-acid chain: MTVHIDGIVAIVLFYLLILFVGLWAAWKSKNTSMEGAMDRSEAIMIGGRDIGLLVGGFTMTATWVGGGYINGTAEAVYVPGYGLAWAQAPFGYALSLVIGGLFFAKPMRSRGYVTMLDPFQQMYGKRMGGLLFIPALLGEIFWSAAILSALGATLSVIVDININVSVVVSAVIAVLYTLVGGLYSVAYTDVVQLFCIFLGLWISIPFALLNPAVTDIIVTANQEVYQEPWVGNIQSKDSLIWIDNFLLLMLGGIPWQVYFQRVLSASSATYAQVLSFLAAFGCVLMAIPSVLIGAIGTSTDWNQTSYGLPGPIGKNETDMILPIVLQHLCPPYISFFGLGAVSAAVMSSADSSILSASSMFARNIYHLAFRQEASDKEIVWVMRITIFLFGGAATSMALLAQSIYGLWYLSSDLVYVIIFPQLISVLFVKGTNTYGSIAGYIIGFLLRISGGEPYLHMQPFIYYPGCYLDHSFGDDPVYVQRFPFKTMAMLFSFLGNTGVSYLVKYLFVSGILPPKLDFLDSVVSKHSKEIMDKTFLMNQDNITLSELVHVNPIHSASVSAALTNKEAFEDIEPNPELSKSGND.

Residues 1 to 6 (MTVHID) are Extracellular-facing. The helical transmembrane segment at 7–27 (GIVAIVLFYLLILFVGLWAAW) threads the bilayer. Residues 28–50 (KSKNTSMEGAMDRSEAIMIGGRD) are Cytoplasmic-facing. A helical membrane pass occupies residues 51–71 (IGLLVGGFTMTATWVGGGYIN). Residues 72 to 83 (GTAEAVYVPGYG) lie on the Extracellular side of the membrane. Residues 84 to 104 (LAWAQAPFGYALSLVIGGLFF) traverse the membrane as a helical segment. Residues 105–127 (AKPMRSRGYVTMLDPFQQMYGKR) are Cytoplasmic-facing. The helical transmembrane segment at 128–148 (MGGLLFIPALLGEIFWSAAIL) threads the bilayer. The Extracellular segment spans residues 149-166 (SALGATLSVIVDININVS). Residues 167 to 187 (VVVSAVIAVLYTLVGGLYSVA) traverse the membrane as a helical segment. The Cytoplasmic segment spans residues 188-193 (YTDVVQ). Residues 194–214 (LFCIFLGLWISIPFALLNPAV) form a helical membrane-spanning segment. The Extracellular segment spans residues 215 to 239 (TDIIVTANQEVYQEPWVGNIQSKDS). A helical transmembrane segment spans residues 240–260 (LIWIDNFLLLMLGGIPWQVYF). Topologically, residues 261–276 (QRVLSASSATYAQVLS) are cytoplasmic. The chain crosses the membrane as a helical span at residues 277–297 (FLAAFGCVLMAIPSVLIGAIG). Residues 298–319 (TSTDWNQTSYGLPGPIGKNETD) lie on the Extracellular side of the membrane. Asparagine 303 carries N-linked (GlcNAc...) asparagine glycosylation. The chain crosses the membrane as a helical span at residues 320 to 340 (MILPIVLQHLCPPYISFFGLG). The Cytoplasmic portion of the chain corresponds to 341 to 378 (AVSAAVMSSADSSILSASSMFARNIYHLAFRQEASDKE). A helical transmembrane segment spans residues 379 to 399 (IVWVMRITIFLFGGAATSMAL). The Extracellular segment spans residues 400-408 (LAQSIYGLW). A helical membrane pass occupies residues 409-429 (YLSSDLVYVIIFPQLISVLFV). Over 430–437 (KGTNTYGS) the chain is Cytoplasmic. The chain crosses the membrane as a helical span at residues 438 to 458 (IAGYIIGFLLRISGGEPYLHM). Over 459–487 (QPFIYYPGCYLDHSFGDDPVYVQRFPFKT) the chain is Extracellular. A helical transmembrane segment spans residues 488-508 (MAMLFSFLGNTGVSYLVKYLF). Residues 509–584 (VSGILPPKLD…NPELSKSGND (76 aa)) lie on the Cytoplasmic side of the membrane.

It belongs to the sodium:solute symporter (SSF) (TC 2.A.21) family. In terms of processing, phosphorylated. Specific for cholinergic neurons.

It is found in the membrane. Its function is as follows. Imports choline from the extracellular space to the neuron with high affinity. Rate-limiting step in acetylcholine synthesis. Sodium ion and chloride ion dependent. This is High-affinity choline transporter 1 (CHT1) from Torpedo marmorata (Marbled electric ray).